We begin with the raw amino-acid sequence, 307 residues long: Serine/threonine-protein phosphatase 4 catalytic subunit (307 aa).

A2 bears the N-acetylalanine mark. Residues D54, H56, D82, and N114 each coordinate Mn(2+). H115 serves as the catalytic Proton donor. Positions 164 and 238 each coordinate Mn(2+). Leucine methyl ester is present on L307.

The protein belongs to the PPP phosphatase family. PP-4 (PP-X) subfamily. Serine/threonine-protein phosphatase 4 (PP4) occurs in different assemblies of the catalytic and one or more regulatory subunits. Component of the PP4 complexes PPP4C-PPP4R1, PPP4C-PPP4R2, PPP4C-PPP4R2-PPP4R3A, PPP4C-PPP4R2-PPP4R3B and PPP4C-PPP4R4. The PPP4C-PPP4R2 complex appears to be a tetramer composed of 2 molecules of PPP4C and 2 molecules of PPP4R2. Interacts with REL, NFKB1/p50 and RELA. Interacts with SMN1 and GEMIN4. Interacts with IRS4 (phosphorylated). Interacts with SMEK1/PPP4R3A; the interaction requires PP4R2. Interacts with HDAC3. The cofactor is Mn(2+). In terms of processing, methylation at the C-terminal Leu-307 is critical for interactions with regulatory subunits and functions in DNA repair.

Its subcellular location is the cytoplasm. The protein resides in the nucleus. It localises to the cytoskeleton. The protein localises to the microtubule organizing center. It is found in the centrosome. It catalyses the reaction O-phospho-L-seryl-[protein] + H2O = L-seryl-[protein] + phosphate. The enzyme catalyses O-phospho-L-threonyl-[protein] + H2O = L-threonyl-[protein] + phosphate. Protein phosphatase that is involved in many processes such as microtubule organization at centrosomes, maturation of spliceosomal snRNPs, apoptosis, DNA repair, tumor necrosis factor (TNF)-alpha signaling, activation of c-Jun N-terminal kinase MAPK8, regulation of histone acetylation, DNA damage checkpoint signaling, NF-kappa-B activation and cell migration. The PPP4C-PPP4R1 PP4 complex may play a role in dephosphorylation and regulation of HDAC3. The PPP4C-PPP4R2-PPP4R3A PP4 complex specifically dephosphorylates H2AX phosphorylated on Ser-140 (gamma-H2AX) generated during DNA replication and required for DNA double strand break repair. Dephosphorylates NDEL1 at CDK1 phosphorylation sites and negatively regulates CDK1 activity in interphase. In response to DNA damage, catalyzes RPA2 dephosphorylation, an essential step for DNA repair since it allows the efficient RPA2-mediated recruitment of RAD51 to chromatin. The protein is Serine/threonine-protein phosphatase 4 catalytic subunit (PPP4C) of Homo sapiens (Human).